Reading from the N-terminus, the 388-residue chain is Succinate--CoA ligase [ADP-forming] subunit beta (388 aa).

The region spanning 9-244 (KSLFAEYGLP…PSQDDAREAH (236 aa)) is the ATP-grasp domain. ATP contacts are provided by residues K46, 53 to 55 (GRG), E99, T102, and E107. Mg(2+)-binding residues include N199 and D213. Residues N264 and 321-323 (GIV) each bind substrate.

It belongs to the succinate/malate CoA ligase beta subunit family. As to quaternary structure, heterotetramer of two alpha and two beta subunits. Mg(2+) is required as a cofactor.

The enzyme catalyses succinate + ATP + CoA = succinyl-CoA + ADP + phosphate. It carries out the reaction GTP + succinate + CoA = succinyl-CoA + GDP + phosphate. It participates in carbohydrate metabolism; tricarboxylic acid cycle; succinate from succinyl-CoA (ligase route): step 1/1. Functionally, succinyl-CoA synthetase functions in the citric acid cycle (TCA), coupling the hydrolysis of succinyl-CoA to the synthesis of either ATP or GTP and thus represents the only step of substrate-level phosphorylation in the TCA. The beta subunit provides nucleotide specificity of the enzyme and binds the substrate succinate, while the binding sites for coenzyme A and phosphate are found in the alpha subunit. This is Succinate--CoA ligase [ADP-forming] subunit beta from Shewanella oneidensis (strain ATCC 700550 / JCM 31522 / CIP 106686 / LMG 19005 / NCIMB 14063 / MR-1).